A 119-amino-acid chain; its full sequence is Movement protein TGB2 (119 aa).

Residues 1 to 13 (MVRNNEIGARPNK) are Cytoplasmic-facing. The helical transmembrane segment at 14 to 34 (YWPVVAAVVAICLFGFLTVTN) threads the bilayer. Over 35 to 79 (QKHATQSGDNIHKFANGGQYRDGSKSIKYNCNNPRAYNGSSSNIT) the chain is Lumenal. A helical membrane pass occupies residues 80–100 (FSQLFLPVLLIGAALYAYLWF). Topologically, residues 101–119 (TRPDCSVTCRGDCCRSYGG) are cytoplasmic.

It belongs to the virgaviridae/benyvirus TGB2 movement protein family. Interacts with movement protein TGB3. TGB1-TGB3-TGB2 complex formation is enhanced by ATP hydrolysis.

Its subcellular location is the host cell junction. It is found in the host plasmodesma. The protein localises to the host endoplasmic reticulum membrane. It localises to the host cytoplasm. The protein resides in the host cytoskeleton. Its subcellular location is the host chloroplast envelope. Functionally, participates in the transport of viral genome to neighboring plant cells directly through plasmodesmata, without any budding. TGBp2 and TGBp3 are necessary for intracellular delivery of TGBp1-containing vRNPs to plasmodesmata. Can gate plasmodesmata and increase their size exclusion limit. To a lesser extent than TGB3, induces host actin cytoskeleton network thickening, which probably plays a major role in virus cell-to-cell movement. Binds ssRNA in a sequence non-specific manner. This Potato mop-top virus (isolate Potato/Sweden/Sw) (PMTV) protein is Movement protein TGB2.